Reading from the N-terminus, the 154-residue chain is Protein E6 (154 aa).

2 zinc fingers span residues 30-66 and 103-139; these read CVFCKTVLKTAEVLAFAFRELYVVWRDDFPHAACPRC and CCKCHKPLSPVEKTNHIVKKTQFFKLKDSWTGYCLHC.

This sequence belongs to the papillomaviridae E6 protein family. As to quaternary structure, forms homodimers. Interacts with ubiquitin-protein ligase UBE3A/E6-AP; this interaction stimulates UBE3A ubiquitin activity. Interacts with host TP53 and EP300; this interaction inhibits TP53 activity.

The protein localises to the host cytoplasm. The protein resides in the host nucleus. Plays a major role in the induction and maintenance of cellular transformation. E6 associates with host UBE3A/E6-AP ubiquitin-protein ligase and modulates its activity. Sequesters tumor suppressor TP53 in the host cytoplasm and modulates its activity by interacting with host EP300 that results in the reduction of TP53 acetylation and activation. In turn, apoptosis induced by DNA damage is inhibited. E6 also protects host keratinocytes from apoptosis by mediating the degradation of host BAK1. May also inhibit host immune response. The protein is Protein E6 of Homo sapiens (Human).